The primary structure comprises 148 residues: uncharacterized protein (148 aa).

Residues 3 to 64 (LDALDRKILE…KLNYESIGYD (62 aa)) enclose the HTH asnC-type domain. The H-T-H motif DNA-binding region spans 22-41 (YREIAKDLNVAVGTIYNRIK).

This is an uncharacterized protein from Pyrococcus horikoshii (strain ATCC 700860 / DSM 12428 / JCM 9974 / NBRC 100139 / OT-3).